A 325-amino-acid polypeptide reads, in one-letter code: 4-diphosphocytidyl-2-C-methyl-D-erythritol kinase (325 aa).

Lysine 22 is a catalytic residue. Position 110–120 (proline 110–alanine 120) interacts with ATP. Residue aspartate 152 is part of the active site. Residues proline 306–serine 325 are disordered.

Belongs to the GHMP kinase family. IspE subfamily.

The catalysed reaction is 4-CDP-2-C-methyl-D-erythritol + ATP = 4-CDP-2-C-methyl-D-erythritol 2-phosphate + ADP + H(+). It participates in isoprenoid biosynthesis; isopentenyl diphosphate biosynthesis via DXP pathway; isopentenyl diphosphate from 1-deoxy-D-xylulose 5-phosphate: step 3/6. Functionally, catalyzes the phosphorylation of the position 2 hydroxy group of 4-diphosphocytidyl-2C-methyl-D-erythritol. The sequence is that of 4-diphosphocytidyl-2-C-methyl-D-erythritol kinase from Kineococcus radiotolerans (strain ATCC BAA-149 / DSM 14245 / SRS30216).